The chain runs to 408 residues: Argininosuccinate synthase (408 aa).

ATP contacts are provided by residues 16 to 24 and Ala44; that span reads AYSGGLDTS. Tyr96 and Ser101 together coordinate L-citrulline. An ATP-binding site is contributed by Gly126. L-aspartate is bound by residues Thr128, Asn132, and Asp133. Residue Asn132 participates in L-citrulline binding. L-citrulline contacts are provided by Arg136, Ser185, Ser194, Glu270, and Tyr282.

The protein belongs to the argininosuccinate synthase family. Type 1 subfamily. Homotetramer.

Its subcellular location is the cytoplasm. It carries out the reaction L-citrulline + L-aspartate + ATP = 2-(N(omega)-L-arginino)succinate + AMP + diphosphate + H(+). It functions in the pathway amino-acid biosynthesis; L-arginine biosynthesis; L-arginine from L-ornithine and carbamoyl phosphate: step 2/3. The sequence is that of Argininosuccinate synthase from Shewanella woodyi (strain ATCC 51908 / MS32).